Here is an 885-residue protein sequence, read N- to C-terminus: Alpha-actinin (885 aa).

The interval 1–242 is actin-binding; the sequence is MTQDGYMQQE…IMTYVSWYYH (242 aa). 2 consecutive Calponin-homology (CH) domains span residues 26-130 and 139-245; these read KQQR…LRFA and MTAK…HAFH. Spectrin repeat units lie at residues 270–377, 389–494, 508–614, and 626–727; these read LMEE…EEWL, HLAQ…ALDE, EFAK…HTLQ, and LRRQ…NEVE. 2 consecutive EF-hand domains span residues 741 to 776 and 780 to 815; these read EQLN…LGYN and DDRP…EYTD. Ca(2+)-binding residues include Asp-754, Thr-758, Arg-760, Glu-765, Asp-793, Asn-795, Thr-797, and Tyr-799.

The protein belongs to the alpha-actinin family. As to quaternary structure, homodimer; antiparallel.

Functionally, F-actin cross-linking protein which is thought to anchor actin to a variety of intracellular structures. This is a bundling protein. The protein is Alpha-actinin of Dermatophagoides farinae (American house dust mite).